We begin with the raw amino-acid sequence, 837 residues long: Phosphatidylinositol-glycan-specific phospholipase D (837 aa).

A signal peptide spans 1–23 (MSAGRLWSSLLLLLPLFCSKSSS). N-linked (GlcNAc...) asparagine glycosylation is found at N94, N267, N287, N303, and N317. 7 FG-GAP repeats span residues 364–425 (SPSA…GLPP), 431–492 (NKEG…GRLS), 494–554 (SPNV…RNDK), 561–619 (EADW…SLGK), 629–689 (QSTI…GATR), 701–767 (ALLS…TLGD), and 785–837 (QYVL…FSSD). N477, N496, N586, N599, and N655 each carry an N-linked (GlcNAc...) asparagine glycan.

It belongs to the GPLD1 family. In terms of assembly, monomer. As to expression, widely expressed.

Its subcellular location is the secreted. It carries out the reaction a 6-(alpha-D-glucosaminyl)-1-(1,2-diacyl-sn-glycero-3-phospho)-1D-myo-inositol + H2O = 6-(alpha-D-glucosaminyl)-1D-myo-inositol + a 1,2-diacyl-sn-glycero-3-phosphate + H(+). This protein hydrolyzes the inositol phosphate linkage in proteins anchored by phosphatidylinositol glycans (GPI-anchor) thus releasing these proteins from the membrane. The polypeptide is Phosphatidylinositol-glycan-specific phospholipase D (Gpld1) (Mus musculus (Mouse)).